The chain runs to 895 residues: La RNA-binding domain-containing protein LHP1 (895 aa).

5 disordered regions span residues 24–265, 285–344, 359–590, 796–857, and 870–895; these read ANGN…PPPS, SATS…HDAT, GEDK…LGHG, PDAA…AQDV, and VNGE…NYEQ. The segment covering 31-75 has biased composition (low complexity); the sequence is SSPSSSSSATPEPTSLSSSTSGKKAFSTATSKSGQQKQGSSPQPG. A compositionally biased stretch (basic and acidic residues) spans 95 to 143; sequence QRTDRSEEKEKRGSSSKNWRERSHRDEKNQDDGEKRNGRERSKKEKGDK. Over residues 152–170 the composition is skewed to low complexity; the sequence is SATSSEKTAKSLSSSTKNA. Polar residues-rich tracts occupy residues 172–184 and 192–216; these read GVTS…NPIA and KAQN…STIN. Over residues 228–244 the composition is skewed to basic and acidic residues; it reads DNWRARPAKVEKNEKTE. The span at 251–260 shows a compositional bias: low complexity; that stretch reads QAQPQPQRQL. Over residues 296 to 314 the composition is skewed to basic and acidic residues; sequence KSDKEKSLTNGMVKEEDSG. Residues 325–336 are compositionally biased toward low complexity; that stretch reads AAAAAAAGTSST. Composition is skewed to basic and acidic residues over residues 359-371, 405-428, 452-468, and 485-495; these read GEDK…ERLN, HAAE…REGG, EGKK…DGHA, and GDVKETKEGDA. Positions 496–508 are enriched in low complexity; it reads RSASQQESSSHRS. Residues 510–521 show a composition bias toward polar residues; it reads PSISASANTGID. The segment covering 563-572 has biased composition (gly residues); it reads RGSFGGGRAR. An HTH La-type RNA-binding domain is found at 706–796; sequence VPNLDPLRFY…GAESHRWVLP (91 aa). A Phosphoserine modification is found at Ser-847. The span at 873-884 shows a compositional bias: basic and acidic residues; sequence EIKEKEEVKAME. Positions 885-895 are enriched in acidic residues; the sequence is NEGEESENYEQ.

In terms of biological role, may act as an RNA-binding protein. This chain is La RNA-binding domain-containing protein LHP1, found in Cryptococcus neoformans var. grubii serotype A (strain H99 / ATCC 208821 / CBS 10515 / FGSC 9487) (Filobasidiella neoformans var. grubii).